The sequence spans 149 residues: UPF0178 protein NT01CX_0440 (149 aa).

This sequence belongs to the UPF0178 family.

The protein is UPF0178 protein NT01CX_0440 of Clostridium novyi (strain NT).